We begin with the raw amino-acid sequence, 298 residues long: GTPase Era (298 aa).

Positions 4 to 171 (RAGFVALIGR…KEKIVSFLPE (168 aa)) constitute an Era-type G domain. Positions 12-19 (GRTNVGKS) are G1. Residue 12 to 19 (GRTNVGKS) participates in GTP binding. The tract at residues 38 to 42 (QTTRN) is G2. Residues 59–62 (DTPG) form a G3 region. GTP contacts are provided by residues 59 to 63 (DTPGI) and 121 to 124 (NKID). Residues 121-124 (NKID) form a G4 region. Positions 150-152 (ISA) are G5. One can recognise a KH type-2 domain in the interval 202–280 (LEEEVPHGVY…FLQLWVKVRK (79 aa)).

The protein belongs to the TRAFAC class TrmE-Era-EngA-EngB-Septin-like GTPase superfamily. Era GTPase family. Monomer.

Its subcellular location is the cytoplasm. It is found in the cell membrane. In terms of biological role, an essential GTPase that binds both GDP and GTP, with rapid nucleotide exchange. Plays a role in 16S rRNA processing and 30S ribosomal subunit biogenesis and possibly also in cell cycle regulation and energy metabolism. The chain is GTPase Era from Caldanaerobacter subterraneus subsp. tengcongensis (strain DSM 15242 / JCM 11007 / NBRC 100824 / MB4) (Thermoanaerobacter tengcongensis).